Reading from the N-terminus, the 477-residue chain is UDP-N-acetylmuramate--L-alanine ligase (477 aa).

112–118 (GAHGKTT) provides a ligand contact to ATP.

This sequence belongs to the MurCDEF family.

It is found in the cytoplasm. It catalyses the reaction UDP-N-acetyl-alpha-D-muramate + L-alanine + ATP = UDP-N-acetyl-alpha-D-muramoyl-L-alanine + ADP + phosphate + H(+). It participates in cell wall biogenesis; peptidoglycan biosynthesis. In terms of biological role, cell wall formation. The polypeptide is UDP-N-acetylmuramate--L-alanine ligase (Acidovorax ebreus (strain TPSY) (Diaphorobacter sp. (strain TPSY))).